The primary structure comprises 310 residues: tRNA uridine(34) hydroxylase (310 aa).

Residues 127–225 enclose the Rhodanese domain; that stretch reads KDKNTIVVDT…YLEDMSKEES (99 aa). The active-site Cysteine persulfide intermediate is the Cys185.

Belongs to the TrhO family.

The enzyme catalyses uridine(34) in tRNA + AH2 + O2 = 5-hydroxyuridine(34) in tRNA + A + H2O. Catalyzes oxygen-dependent 5-hydroxyuridine (ho5U) modification at position 34 in tRNAs. The polypeptide is tRNA uridine(34) hydroxylase (Prochlorococcus marinus subsp. pastoris (strain CCMP1986 / NIES-2087 / MED4)).